We begin with the raw amino-acid sequence, 314 residues long: ATP synthase gamma chain (314 aa).

Belongs to the ATPase gamma chain family. In terms of assembly, F-type ATPases have 2 components, CF(1) - the catalytic core - and CF(0) - the membrane proton channel. CF(1) has five subunits: alpha(3), beta(3), gamma(1), delta(1), epsilon(1). CF(0) has three main subunits: a, b and c.

The protein resides in the cell membrane. In terms of biological role, produces ATP from ADP in the presence of a proton gradient across the membrane. The gamma chain is believed to be important in regulating ATPase activity and the flow of protons through the CF(0) complex. This Lactiplantibacillus plantarum (strain ATCC BAA-793 / NCIMB 8826 / WCFS1) (Lactobacillus plantarum) protein is ATP synthase gamma chain.